We begin with the raw amino-acid sequence, 705 residues long: 3-hydroxypropionate--CoA ligase [ADP-forming] (705 aa).

The 37-residue stretch at 25–61 (KSILKNYGVKVPPYALVTSAEEAAKEAKKIGFPLVMK) folds into the ATP-grasp domain. ATP is bound at residue 51 to 61 (AKKIGFPLVMK).

In the N-terminal section; belongs to the acetate CoA ligase beta subunit family. The protein in the C-terminal section; belongs to the acetate CoA ligase alpha subunit family. Requires Mg(2+) as cofactor. The cofactor is Mn(2+).

It carries out the reaction 3-hydroxypropanoate + ATP + CoA = 3-hydroxypropanoyl-CoA + ADP + phosphate. Involved in thaumarchaeal hydroxypropionate/hydroxybutyrate (HP/HB) cycle, a modified version of the autotrophic HP/HB cycle of Crenarchaeota. Catalyzes the formation of 3-hydroxypropionyl-CoA, ADP and phosphate from 3-hydroxypropionate, coenzyme A (CoA) and ATP. Can also use 4-hydroxybutyrate, propionate and butyrate, with poor catalytic efficiency. This is 3-hydroxypropionate--CoA ligase [ADP-forming] from Nitrosopumilus maritimus (strain SCM1).